Reading from the N-terminus, the 156-residue chain is uncharacterized protein (156 aa).

Positions 1–12 (MSSRFARSNGNP) are enriched in polar residues. Residues 1-27 (MSSRFARSNGNPNHIRKRNHSPDPIGI) form a disordered region. S21 bears the Phosphoserine mark.

The protein resides in the cytoplasm. The protein localises to the nucleus. This is an uncharacterized protein from Saccharomyces cerevisiae (strain ATCC 204508 / S288c) (Baker's yeast).